A 354-amino-acid polypeptide reads, in one-letter code: Methylthioribose-1-phosphate isomerase (354 aa).

Residues 49–51 (RGA), R92, and Q199 contribute to the substrate site. Catalysis depends on D240, which acts as the Proton donor. 250 to 251 (NK) lines the substrate pocket.

It belongs to the eIF-2B alpha/beta/delta subunits family. MtnA subfamily.

It carries out the reaction 5-(methylsulfanyl)-alpha-D-ribose 1-phosphate = 5-(methylsulfanyl)-D-ribulose 1-phosphate. It participates in amino-acid biosynthesis; L-methionine biosynthesis via salvage pathway; L-methionine from S-methyl-5-thio-alpha-D-ribose 1-phosphate: step 1/6. In terms of biological role, catalyzes the interconversion of methylthioribose-1-phosphate (MTR-1-P) into methylthioribulose-1-phosphate (MTRu-1-P). This is Methylthioribose-1-phosphate isomerase from Koribacter versatilis (strain Ellin345).